Here is a 403-residue protein sequence, read N- to C-terminus: Acetylornithine/succinyldiaminopimelate aminotransferase (403 aa).

Residues 107 to 108 and Phe-140 contribute to the pyridoxal 5'-phosphate site; that span reads GA. Residue Arg-143 coordinates N(2)-acetyl-L-ornithine. Residue 225–228 coordinates pyridoxal 5'-phosphate; sequence DEVQ. Lys-254 is subject to N6-(pyridoxal phosphate)lysine. Position 282 (Thr-282) interacts with N(2)-acetyl-L-ornithine. Thr-283 contributes to the pyridoxal 5'-phosphate binding site.

It belongs to the class-III pyridoxal-phosphate-dependent aminotransferase family. ArgD subfamily. Homodimer. It depends on pyridoxal 5'-phosphate as a cofactor.

The protein resides in the cytoplasm. It carries out the reaction N(2)-acetyl-L-ornithine + 2-oxoglutarate = N-acetyl-L-glutamate 5-semialdehyde + L-glutamate. The enzyme catalyses N-succinyl-(2S,6S)-2,6-diaminopimelate + 2-oxoglutarate = (S)-2-succinylamino-6-oxoheptanedioate + L-glutamate. It functions in the pathway amino-acid biosynthesis; L-arginine biosynthesis; N(2)-acetyl-L-ornithine from L-glutamate: step 4/4. It participates in amino-acid biosynthesis; L-lysine biosynthesis via DAP pathway; LL-2,6-diaminopimelate from (S)-tetrahydrodipicolinate (succinylase route): step 2/3. In terms of biological role, involved in both the arginine and lysine biosynthetic pathways. The chain is Acetylornithine/succinyldiaminopimelate aminotransferase from Photorhabdus laumondii subsp. laumondii (strain DSM 15139 / CIP 105565 / TT01) (Photorhabdus luminescens subsp. laumondii).